Consider the following 238-residue polypeptide: Probable xyloglucan-specific endo-beta-1,4-glucanase A (238 aa).

The first 18 residues, 1 to 18 (MKFSLSVALSLAAATAQA), serve as a signal peptide directing secretion. Residues Asn-106 and Asn-171 are each glycosylated (N-linked (GlcNAc...) asparagine).

This sequence belongs to the glycosyl hydrolase 12 (cellulase H) family.

It localises to the secreted. It carries out the reaction xyloglucan + H2O = xyloglucan oligosaccharides.. Its function is as follows. Catalyzes endohydrolysis of 1,4-beta-D-glucosidic linkages in xyloglucan with retention of the beta-configuration of the glycosyl residues. Specific for xyloglucan and does not hydrolyze other cell wall components. In Neosartorya fischeri (strain ATCC 1020 / DSM 3700 / CBS 544.65 / FGSC A1164 / JCM 1740 / NRRL 181 / WB 181) (Aspergillus fischerianus), this protein is Probable xyloglucan-specific endo-beta-1,4-glucanase A (xgeA).